Here is a 306-residue protein sequence, read N- to C-terminus: Mitochondrial substrate carrier family protein M (306 aa).

At 1 to 10 the chain is on the mitochondrial intermembrane side; it reads MRYILNNNVE. 3 Solcar repeats span residues 5–98, 108–195, and 207–299; these read LNNN…YKNI, LNTF…IKFY, and LNAS…IKKS. A helical transmembrane segment spans residues 11–31; it reads GTSALLGSTVATAFLQPFDFL. Topologically, residues 32-72 are mitochondrial matrix; that stretch reads KIRLQGSGFASGGDLNKFKRVGVIDTCKNVLKNEGIKQFWR. A helical transmembrane segment spans residues 73–89; the sequence is GSSPTIVASGIAWGTYM. Residues 90 to 113 lie on the Mitochondrial intermembrane side of the membrane; sequence HFYEAYKNILKSKYNVTQLNTFDH. Residues 114-134 form a helical membrane-spanning segment; sequence FICAVGASATQVFITNPIFLI. At 135–163 the chain is on the mitochondrial matrix side; sequence KTRMQLQTPGSANYYTGIFDGIKKTVKVE. A helical transmembrane segment spans residues 164-184; the sequence is GFKGLYKGVIPSLWLTFHGGI. The Mitochondrial intermembrane segment spans residues 185–211; that stretch reads QMSSYEHIKFYFSSNSGKSLDSLNASE. Residues 212-232 form a helical membrane-spanning segment; that stretch reads IFIASSISKFLASTILYPFQV. Over 233-278 the chain is Mitochondrial matrix; that stretch reads VKTRLQDERNIPNQNNVRVYNGTKDVIFKILKNEGIIGFYRGLVPN. Residues 279–296 form a helical membrane-spanning segment; sequence TLKVIPNTSITLLLYEEI. Residues 297–306 are Mitochondrial intermembrane-facing; that stretch reads KKSFNYIINE.

Belongs to the mitochondrial carrier (TC 2.A.29) family.

It is found in the mitochondrion inner membrane. In terms of biological role, mitochondrial solute carriers shuttle metabolites, nucleotides, and cofactors through the mitochondrial inner membrane. Transports folate across the inner membranes of mitochondria. This is Mitochondrial substrate carrier family protein M (mcfM) from Dictyostelium discoideum (Social amoeba).